The following is a 129-amino-acid chain: MALLFENMCNFPGFDPHSGEFELPKRFCSNNSLSLFSTPVMFHSYKSALVDTCRYTTDDNSTDDSYLRYGDEFSIATKTEKARQKTVSKKYKSRKGRRYTRERNISSEKNKTDKSHKVRVGKIQNINND.

Basic residues predominate over residues 84 to 98; sequence QKTVSKKYKSRKGRR. The disordered stretch occupies residues 84–129; the sequence is QKTVSKKYKSRKGRRYTRERNISSEKNKTDKSHKVRVGKIQNINND. The segment covering 99–115 has biased composition (basic and acidic residues); that stretch reads YTRERNISSEKNKTDKS.

This is an uncharacterized protein from Acanthamoeba polyphaga mimivirus (APMV).